Here is a 327-residue protein sequence, read N- to C-terminus: MFDAAPIKKVSVVIPVYNEQESLPELIRRTTTACESLSKAWEILLIDDGSSDSSAELMVKASQEADSHIISILLNRNYGQHAAIMAGFSHVSGDLIITLDADLQNPPEEIPRLVAKADEGFDVVGTVRQNRQDSLFRKSASKIINLLIQRTTGKAMGDYGCMLRAYRRPIIDTMLRCHERSTFIPILANIFARRATEIPVHHAEREFGDSKYSFMRLINLMYDLVTCLTTTPLRLLSLLGSVIAIGGFSLSVLLIVLRLALGPQWAAEGVFMLFAVLFTFIGAQFIGMGLLGEYIGRIYNDVRARPRYFVQQVIYPESTPFTEESHQ.

Topologically, residues 1 to 235 (MFDAAPIKKV…TCLTTTPLRL (235 aa)) are cytoplasmic. Residues 236–256 (LSLLGSVIAIGGFSLSVLLIV) form a helical membrane-spanning segment. Residues 257 to 269 (LRLALGPQWAAEG) lie on the Periplasmic side of the membrane. A helical membrane pass occupies residues 270–290 (VFMLFAVLFTFIGAQFIGMGL). Over 291–327 (LGEYIGRIYNDVRARPRYFVQQVIYPESTPFTEESHQ) the chain is Cytoplasmic.

Belongs to the glycosyltransferase 2 family.

It is found in the cell inner membrane. It catalyses the reaction UDP-4-deoxy-4-formamido-beta-L-arabinose + di-trans,octa-cis-undecaprenyl phosphate = 4-deoxy-4-formamido-alpha-L-arabinopyranosyl di-trans,octa-cis-undecaprenyl phosphate + UDP. The protein operates within glycolipid biosynthesis; 4-amino-4-deoxy-alpha-L-arabinose undecaprenyl phosphate biosynthesis; 4-amino-4-deoxy-alpha-L-arabinose undecaprenyl phosphate from UDP-4-deoxy-4-formamido-beta-L-arabinose and undecaprenyl phosphate: step 1/2. It functions in the pathway bacterial outer membrane biogenesis; lipopolysaccharide biosynthesis. Its function is as follows. Catalyzes the transfer of 4-deoxy-4-formamido-L-arabinose from UDP to undecaprenyl phosphate. The modified arabinose is attached to lipid A and is required for resistance to polymyxin and cationic antimicrobial peptides. This Salmonella choleraesuis (strain SC-B67) protein is Undecaprenyl-phosphate 4-deoxy-4-formamido-L-arabinose transferase.